Consider the following 439-residue polypeptide: D-inositol 3-phosphate glycosyltransferase (439 aa).

Residue histidine 21 participates in 1D-myo-inositol 3-phosphate binding. UDP-N-acetyl-alpha-D-glucosamine contacts are provided by residues glutamine 27–proline 28 and glycine 35. 1D-myo-inositol 3-phosphate contacts are provided by residues aspartate 32–asparagine 37, lysine 90, tyrosine 123, threonine 147, and arginine 167. UDP-N-acetyl-alpha-D-glucosamine is bound by residues arginine 241, lysine 246, and glutamine 299. Tyrosine 308, arginine 309, and alanine 311 together coordinate Mg(2+). 2 residues coordinate UDP-N-acetyl-alpha-D-glucosamine: glutamate 321 and glutamate 329. Position 335 (threonine 335) interacts with Mg(2+).

Belongs to the glycosyltransferase group 1 family. MshA subfamily. In terms of assembly, homodimer.

It carries out the reaction 1D-myo-inositol 3-phosphate + UDP-N-acetyl-alpha-D-glucosamine = 1D-myo-inositol 2-acetamido-2-deoxy-alpha-D-glucopyranoside 3-phosphate + UDP + H(+). In terms of biological role, catalyzes the transfer of a N-acetyl-glucosamine moiety to 1D-myo-inositol 3-phosphate to produce 1D-myo-inositol 2-acetamido-2-deoxy-glucopyranoside 3-phosphate in the mycothiol biosynthesis pathway. This Mycobacterium sp. (strain KMS) protein is D-inositol 3-phosphate glycosyltransferase.